The following is a 343-amino-acid chain: Glucokinase (343 aa).

18–23 (GDIGGT) contributes to the ATP binding site.

Belongs to the bacterial glucokinase family.

The protein resides in the cytoplasm. It catalyses the reaction D-glucose + ATP = D-glucose 6-phosphate + ADP + H(+). In Brucella abortus (strain 2308), this protein is Glucokinase.